We begin with the raw amino-acid sequence, 228 residues long: Phosphoglycolate phosphatase (228 aa).

Catalysis depends on D9, which acts as the Nucleophile. Positions 9 and 11 each coordinate Mg(2+). A substrate-binding site is contributed by K151. The Mg(2+) site is built by D174 and D178.

It belongs to the archaeal SPP-like hydrolase family. It depends on Mg(2+) as a cofactor.

It carries out the reaction 2-phosphoglycolate + H2O = glycolate + phosphate. In terms of biological role, catalyzes the dephosphorylation of 2-phosphoglycolate. The protein is Phosphoglycolate phosphatase of Pyrobaculum neutrophilum (strain DSM 2338 / JCM 9278 / NBRC 100436 / V24Sta) (Thermoproteus neutrophilus).